The sequence spans 271 residues: Formamidopyrimidine-DNA glycosylase (271 aa).

Proline 2 functions as the Schiff-base intermediate with DNA in the catalytic mechanism. Glutamate 3 acts as the Proton donor in catalysis. Lysine 57 functions as the Proton donor; for beta-elimination activity in the catalytic mechanism. DNA contacts are provided by histidine 90, arginine 109, and lysine 150. An FPG-type zinc finger spans residues 235 to 269; that stretch reads LVYGNKDKPCPKCGGKIESLIIGQRNSFFCPKCQK. The active-site Proton donor; for delta-elimination activity is arginine 259.

It belongs to the FPG family. Monomer. The cofactor is Zn(2+).

It catalyses the reaction Hydrolysis of DNA containing ring-opened 7-methylguanine residues, releasing 2,6-diamino-4-hydroxy-5-(N-methyl)formamidopyrimidine.. The enzyme catalyses 2'-deoxyribonucleotide-(2'-deoxyribose 5'-phosphate)-2'-deoxyribonucleotide-DNA = a 3'-end 2'-deoxyribonucleotide-(2,3-dehydro-2,3-deoxyribose 5'-phosphate)-DNA + a 5'-end 5'-phospho-2'-deoxyribonucleoside-DNA + H(+). Involved in base excision repair of DNA damaged by oxidation or by mutagenic agents. Acts as a DNA glycosylase that recognizes and removes damaged bases. Has a preference for oxidized purines, such as 7,8-dihydro-8-oxoguanine (8-oxoG). Has AP (apurinic/apyrimidinic) lyase activity and introduces nicks in the DNA strand. Cleaves the DNA backbone by beta-delta elimination to generate a single-strand break at the site of the removed base with both 3'- and 5'-phosphates. The protein is Formamidopyrimidine-DNA glycosylase of Haemophilus influenzae (strain PittEE).